The chain runs to 432 residues: C2H2 type master regulator of conidiophore development brlA (432 aa).

2 disordered regions span residues 22 to 72 (SNEC…RTPG) and 238 to 260 (KQHS…ADTP). Residues 29-44 (TSSFSPLESPTPTPTS) are compositionally biased toward low complexity. 2 stretches are compositionally biased toward polar residues: residues 62–72 (LPNNTYERTPG) and 238–252 (KQHS…CSLG). 2 C2H2-type zinc fingers span residues 320 to 344 (FKCK…MKSH) and 350 to 375 (HVCW…TKTH). A disordered region spans residues 388–432 (LDENSPDYDPEFRGQLTPDGRPIYGSKLDDPIPGAGDMSLDGWDE).

Its subcellular location is the nucleus. In terms of biological role, brlA, abaA and wetA are pivotal regulators of conidiophore development and conidium maturation. They act individually and together to regulate their own expression and that of numerous other sporulation-specific genes. Binds promoters of target genes at brlA response elements (BREs) containing the conserved sequence 5'-(C/A)(A/G)AGGG(G/A)-3'. Controls the expression of the conidiophore-specific phenol oxidase ivoB. Controls the expression of the hydrophobin rodA. Mediates the developmental switch from the indeterminate, apical growth pattern of vegetative cells to the budding growth pattern of conidiophores. Expression of brlA leads to activation of abaA, wetA and stuA, cessation of vegetative growth, cellular vacuolization and spore formation. This chain is C2H2 type master regulator of conidiophore development brlA, found in Emericella nidulans (strain FGSC A4 / ATCC 38163 / CBS 112.46 / NRRL 194 / M139) (Aspergillus nidulans).